The following is a 333-amino-acid chain: Porphobilinogen deaminase (333 aa).

The residue at position 255 (cysteine 255) is an S-(dipyrrolylmethanemethyl)cysteine.

This sequence belongs to the HMBS family. As to quaternary structure, monomer. Dipyrromethane is required as a cofactor.

The catalysed reaction is 4 porphobilinogen + H2O = hydroxymethylbilane + 4 NH4(+). Its pathway is porphyrin-containing compound metabolism; protoporphyrin-IX biosynthesis; coproporphyrinogen-III from 5-aminolevulinate: step 2/4. Tetrapolymerization of the monopyrrole PBG into the hydroxymethylbilane pre-uroporphyrinogen in several discrete steps. The protein is Porphobilinogen deaminase of Burkholderia vietnamiensis (strain G4 / LMG 22486) (Burkholderia cepacia (strain R1808)).